We begin with the raw amino-acid sequence, 295 residues long: Succinate dehydrogenase [ubiquinone] iron-sulfur subunit, mitochondrial (295 aa).

The 2Fe-2S ferredoxin-type domain occupies 67–144 (EKPRLQSYTL…DTKIYPLPHM (78 aa)). Residues C106, C111, C114, and C126 each coordinate [2Fe-2S] cluster. One can recognise a 4Fe-4S ferredoxin-type domain in the interval 185-215 (ERRRLDGLYECILCACCSTSCPSYWWNQDEY). The [4Fe-4S] cluster site is built by C195, C198, and C201. Residue C205 coordinates [3Fe-4S] cluster. Position 210 (W210) interacts with a ubiquinone. The [3Fe-4S] cluster site is built by C252 and C258. C262 provides a ligand contact to [4Fe-4S] cluster.

This sequence belongs to the succinate dehydrogenase/fumarate reductase iron-sulfur protein family. Component of complex II composed of four subunits: a flavoprotein (FP), an iron-sulfur protein (IP), and a cytochrome b composed of a large and a small subunit. It depends on [2Fe-2S] cluster as a cofactor. The cofactor is [3Fe-4S] cluster. Requires [4Fe-4S] cluster as cofactor.

It localises to the mitochondrion inner membrane. It carries out the reaction a quinone + succinate = fumarate + a quinol. It participates in carbohydrate metabolism; tricarboxylic acid cycle; fumarate from succinate (eukaryal route): step 1/1. Iron-sulfur protein (IP) subunit of succinate dehydrogenase (SDH) that is involved in complex II of the mitochondrial electron transport chain and is responsible for transferring electrons from succinate to ubiquinone (coenzyme Q). This Mycosarcoma maydis (Corn smut fungus) protein is Succinate dehydrogenase [ubiquinone] iron-sulfur subunit, mitochondrial (SDH2).